A 394-amino-acid polypeptide reads, in one-letter code: NAD(P)H-quinone oxidoreductase subunit H (394 aa).

Belongs to the complex I 49 kDa subunit family. NDH-1 can be composed of about 15 different subunits; different subcomplexes with different compositions have been identified which probably have different functions.

The protein resides in the cellular thylakoid membrane. It carries out the reaction a plastoquinone + NADH + (n+1) H(+)(in) = a plastoquinol + NAD(+) + n H(+)(out). The enzyme catalyses a plastoquinone + NADPH + (n+1) H(+)(in) = a plastoquinol + NADP(+) + n H(+)(out). Its function is as follows. NDH-1 shuttles electrons from an unknown electron donor, via FMN and iron-sulfur (Fe-S) centers, to quinones in the respiratory and/or the photosynthetic chain. The immediate electron acceptor for the enzyme in this species is believed to be plastoquinone. Couples the redox reaction to proton translocation, and thus conserves the redox energy in a proton gradient. Cyanobacterial NDH-1 also plays a role in inorganic carbon-concentration. This Thermosynechococcus vestitus (strain NIES-2133 / IAM M-273 / BP-1) protein is NAD(P)H-quinone oxidoreductase subunit H.